The following is a 379-amino-acid chain: MSGGEASITGRTAPELNASAAPLDDERELGETVAATALLLAIILVTIVGNSLVIISVFTYRPLRSVQNFFVVSLAVADLTVALFVLPLNVAYRLLNQWLLGSYLCQMWLTCDILCCTSSILNLCVIALDRYWAITDPINYAQKRTIRRVNTMIAAVWALSLVISVPPLLGWNDWPAQFTEDTPCTLTQERLFVVYSSSGSFFIPLIIMSVVYAKIFFATKRRLRERTRKLGTLAVPAPPQRTSSRPLAELESVASQEDETEPSPEPEPLSSRADKPANGISVHQFIEEKQRISLSKERKAARVLGVIMGVFVVCWLPFFLMYAIVPFCTNCAPPSQRVVDFVTWLGYVNSSLNPIIYTIYNKDFRTAFSRLLRCDRRMS.

Over Glu-5–Thr-36 the chain is Extracellular. N-linked (GlcNAc...) asparagine glycosylation occurs at Asn-17. A helical transmembrane segment spans residues Ala-37–Phe-58. The Cytoplasmic segment spans residues Thr-59 to Asn-68. A helical membrane pass occupies residues Phe-69 to Val-90. The Extracellular portion of the chain corresponds to Ala-91–Met-107. Cysteines 105 and 184 form a disulfide. The helical transmembrane segment at Trp-108 to Leu-128 threads the bilayer. Over Asp-129–Arg-148 the chain is Cytoplasmic. The chain crosses the membrane as a helical span at residues Val-149–Trp-171. Residues Asn-172–Ser-196 lie on the Extracellular side of the membrane. Residues Ser-197–Ala-218 traverse the membrane as a helical segment. At Thr-219–Val-303 the chain is on the cytoplasmic side. The segment at Ala-234 to Pro-276 is disordered. The helical transmembrane segment at Leu-304–Val-325 threads the bilayer. The Extracellular segment spans residues Pro-326–Asp-340. The chain crosses the membrane as a helical span at residues Phe-341–Lys-362. At Asp-363–Asp-375 the chain is on the cytoplasmic side.

This sequence belongs to the G-protein coupled receptor 1 family.

It localises to the cell membrane. Its function is as follows. Probable G-protein coupled receptor for an amine. In Amphibalanus amphitrite (Striped barnacle), this protein is Probable G-protein coupled receptor No18.